A 508-amino-acid polypeptide reads, in one-letter code: Hydroxymethylglutaryl-CoA synthase, mitochondrial (508 aa).

Residues 1–37 constitute a mitochondrion transit peptide; the sequence is MQRLLAPARRVLQVKRVMQESSLSPAHLLPAAQQRFS. At Lys52 the chain carries N6-succinyllysine. Glu80 and Ala81 together coordinate (3S)-3-hydroxy-3-methylglutaryl-CoA. An N6-acetyllysine; alternate mark is found at Lys83 and Lys118. An N6-succinyllysine; alternate mark is found at Lys83 and Lys118. The active-site Proton donor/acceptor is Glu132. The (3S)-3-hydroxy-3-methylglutaryl-CoA site is built by Cys166, Asn204, and Thr208. Cys166 serves as the catalytic Acyl-thioester intermediate. An N6-succinyllysine modification is found at Lys221. N6-acetyllysine is present on Lys243. The residue at position 256 (Lys256) is an N6-acetyllysine; alternate. The residue at position 256 (Lys256) is an N6-succinyllysine; alternate. Positions 258 and 301 each coordinate (3S)-3-hydroxy-3-methylglutaryl-CoA. His301 serves as the catalytic Proton donor/acceptor. Lys306 is subject to N6-acetyllysine. Position 310 (Lys310) interacts with (3S)-3-hydroxy-3-methylglutaryl-CoA. Residues Lys310 and Lys327 each carry the N6-acetyllysine; alternate modification. Lys310 and Lys327 each carry N6-succinyllysine; alternate. Residue Lys333 is modified to N6-succinyllysine. 4 positions are modified to N6-acetyllysine; alternate: Lys342, Lys350, Lys354, and Lys358. N6-succinyllysine; alternate is present on residues Lys342, Lys350, Lys354, and Lys358. Positions 380 and 414 each coordinate (3S)-3-hydroxy-3-methylglutaryl-CoA. The residue at position 427 (Lys427) is an N6-acetyllysine. The residue at position 433 (Ser433) is a Phosphoserine. Lys437 is modified (N6-acetyllysine). Ser440 is modified (phosphoserine). At Lys447 the chain carries N6-acetyllysine; alternate. An N6-succinyllysine; alternate modification is found at Lys447. Phosphoserine is present on Ser456. Lys473 bears the N6-acetyllysine; alternate mark. Lys473 bears the N6-succinyllysine; alternate mark. Ser477 carries the post-translational modification Phosphoserine.

The protein belongs to the thiolase-like superfamily. HMG-CoA synthase family. As to quaternary structure, homodimer. Post-translationally, succinylated. Desuccinylated by SIRT5. Succinylation, at least at Lys-83 and Lys-310, inhibits the enzymatic activity. As to expression, liver and kidney.

The protein resides in the mitochondrion. The catalysed reaction is acetoacetyl-CoA + acetyl-CoA + H2O = (3S)-3-hydroxy-3-methylglutaryl-CoA + CoA + H(+). It participates in metabolic intermediate biosynthesis; (R)-mevalonate biosynthesis; (R)-mevalonate from acetyl-CoA: step 2/3. Functionally, catalyzes the first irreversible step in ketogenesis, condensing acetyl-CoA to acetoacetyl-CoA to form HMG-CoA, which is converted by HMG-CoA reductase (HMGCR) into mevalonate. This Rattus norvegicus (Rat) protein is Hydroxymethylglutaryl-CoA synthase, mitochondrial (Hmgcs2).